The primary structure comprises 312 residues: MILKSKDLLGLKDLTAEEIQYILNTAKTMKVILLSKNKKAPHLQGKSIITLFYENSTRTRLSFELASKYLSANAANISVAASSVAKGETLIDTGKTIDMMGADVIVIRHSMSGAPHLLARNVKASVINAGDGMNEHPTQALLDMFTIIEKKGSLKGLKVAIIGDIYHSRVARSNIWGMTKLGAEVSVAGPSTLMPPELDKTGVKVFTTVQEALIDADVVMGLRIQKERQKSGLFPSLREYSRFFGLDEKRLKLAKEDALILHPGPVNRGVELPSSVIDSERSFINEQVTNGVAVRMALLYLLTRRDSGESVN.

The carbamoyl phosphate site is built by R58 and T59. Residue K86 participates in L-aspartate binding. Carbamoyl phosphate-binding residues include R108, H136, and Q139. Residues R169 and R223 each coordinate L-aspartate. Residues G264 and P265 each contribute to the carbamoyl phosphate site.

This sequence belongs to the aspartate/ornithine carbamoyltransferase superfamily. ATCase family. Heterododecamer (2C3:3R2) of six catalytic PyrB chains organized as two trimers (C3), and six regulatory PyrI chains organized as three dimers (R2).

The catalysed reaction is carbamoyl phosphate + L-aspartate = N-carbamoyl-L-aspartate + phosphate + H(+). It functions in the pathway pyrimidine metabolism; UMP biosynthesis via de novo pathway; (S)-dihydroorotate from bicarbonate: step 2/3. In terms of biological role, catalyzes the condensation of carbamoyl phosphate and aspartate to form carbamoyl aspartate and inorganic phosphate, the committed step in the de novo pyrimidine nucleotide biosynthesis pathway. The polypeptide is Aspartate carbamoyltransferase catalytic subunit (Acetivibrio thermocellus (strain ATCC 27405 / DSM 1237 / JCM 9322 / NBRC 103400 / NCIMB 10682 / NRRL B-4536 / VPI 7372) (Clostridium thermocellum)).